We begin with the raw amino-acid sequence, 264 residues long: Thymidylate synthase (264 aa).

R21 is a dUMP binding site. H51 lines the (6R)-5,10-methylene-5,6,7,8-tetrahydrofolate pocket. 126 to 127 (RR) provides a ligand contact to dUMP. Residue C146 is the Nucleophile of the active site. DUMP contacts are provided by residues 166–169 (RSCD), N177, and 207–209 (HLY). A (6R)-5,10-methylene-5,6,7,8-tetrahydrofolate-binding site is contributed by D169. A263 serves as a coordination point for (6R)-5,10-methylene-5,6,7,8-tetrahydrofolate.

Belongs to the thymidylate synthase family. Bacterial-type ThyA subfamily. Homodimer.

It is found in the cytoplasm. It carries out the reaction dUMP + (6R)-5,10-methylene-5,6,7,8-tetrahydrofolate = 7,8-dihydrofolate + dTMP. The protein operates within pyrimidine metabolism; dTTP biosynthesis. Functionally, catalyzes the reductive methylation of 2'-deoxyuridine-5'-monophosphate (dUMP) to 2'-deoxythymidine-5'-monophosphate (dTMP) while utilizing 5,10-methylenetetrahydrofolate (mTHF) as the methyl donor and reductant in the reaction, yielding dihydrofolate (DHF) as a by-product. This enzymatic reaction provides an intracellular de novo source of dTMP, an essential precursor for DNA biosynthesis. The chain is Thymidylate synthase from Shewanella denitrificans (strain OS217 / ATCC BAA-1090 / DSM 15013).